A 510-amino-acid chain; its full sequence is 2,3-bisphosphoglycerate-independent phosphoglycerate mutase (510 aa).

Mn(2+)-binding residues include Asp-12 and Ser-62. Ser-62 serves as the catalytic Phosphoserine intermediate. Residues His-121, 151 to 152 (RD), Arg-183, Arg-189, 258 to 261 (RPDR), and Lys-331 contribute to the substrate site. 5 residues coordinate Mn(2+): Asp-398, His-402, Asp-439, His-440, and His-458.

This sequence belongs to the BPG-independent phosphoglycerate mutase family. In terms of assembly, monomer. Mn(2+) serves as cofactor.

The catalysed reaction is (2R)-2-phosphoglycerate = (2R)-3-phosphoglycerate. Its pathway is carbohydrate degradation; glycolysis; pyruvate from D-glyceraldehyde 3-phosphate: step 3/5. Functionally, catalyzes the interconversion of 2-phosphoglycerate and 3-phosphoglycerate. In Clostridioides difficile (strain 630) (Peptoclostridium difficile), this protein is 2,3-bisphosphoglycerate-independent phosphoglycerate mutase.